Reading from the N-terminus, the 262-residue chain is Indole-3-glycerol phosphate synthase (262 aa).

Belongs to the TrpC family.

It carries out the reaction 1-(2-carboxyphenylamino)-1-deoxy-D-ribulose 5-phosphate + H(+) = (1S,2R)-1-C-(indol-3-yl)glycerol 3-phosphate + CO2 + H2O. It participates in amino-acid biosynthesis; L-tryptophan biosynthesis; L-tryptophan from chorismate: step 4/5. This Nitratiruptor sp. (strain SB155-2) protein is Indole-3-glycerol phosphate synthase.